Consider the following 413-residue polypeptide: CinA-like protein (413 aa).

This sequence belongs to the CinA family.

This Geobacter metallireducens (strain ATCC 53774 / DSM 7210 / GS-15) protein is CinA-like protein.